The following is a 931-amino-acid chain: Adhesion G protein-coupled receptor E1 (931 aa).

Residues 1–27 (MWGFWLLLFWGFSGMYRWGMTTLPTLG) form the signal peptide. The Extracellular segment spans residues 28–644 (QTLGGVNECQ…IMASGELTME (617 aa)). 2 EGF-like domains span residues 32–80 (GVNE…VECQ) and 81–132 (DVNE…FLCA). 21 disulfide bridges follow: cysteine 36–cysteine 48, cysteine 42–cysteine 57, cysteine 59–cysteine 79, cysteine 85–cysteine 98, cysteine 92–cysteine 107, cysteine 109–cysteine 131, cysteine 137–cysteine 149, cysteine 143–cysteine 158, cysteine 160–cysteine 171, cysteine 177–cysteine 189, cysteine 183–cysteine 198, cysteine 200–cysteine 220, cysteine 226–cysteine 239, cysteine 233–cysteine 248, cysteine 250–cysteine 270, cysteine 276–cysteine 286, cysteine 280–cysteine 295, cysteine 297–cysteine 317, cysteine 323–cysteine 336, cysteine 330–cysteine 345, and cysteine 347–cysteine 366. Residues 133 to 172 (DVDECLTIGICPKYSNCSNSVGSYSCTCQPGFVLNGSICE) enclose the EGF-like 3; calcium-binding domain. N-linked (GlcNAc...) asparagine glycans are attached at residues asparagine 148 and asparagine 167. An EGF-like 4; calcium-binding domain is found at 173-221 (DEDECVTRDVCPEHATCHNTLGSYYCTCNSGLESSGGGPMFQGLDESCE). Residues 222-271 (DVDECSRNSTLCGPTFICINTLGSYSCSCPAGFSLPTFQILGHPADGNCT) form the EGF-like 5; calcium-binding domain. Asparagine 229 carries N-linked (GlcNAc...) asparagine glycosylation. Residues asparagine 269 and asparagine 283 are each glycosylated (N-linked (GlcNAc...) asparagine). The region spanning 272–318 (DIDECDDTCPLNSSCTNTIGSYFCTCHPGFASSNGQLNFKDLEVTCE) is the EGF-like 6; calcium-binding domain. The EGF-like 7; calcium-binding domain occupies 319–367 (DIDECTQDPLQCGLNSVCTNVPGSYICGCLPDFQMDPEGSQGYGNFNCK). N-linked (GlcNAc...) asparagine glycosylation is found at asparagine 405, asparagine 417, asparagine 474, and asparagine 498. The GAIN-B domain maps to 482 to 642 (EYLDIESKVI…AIIMASGELT (161 aa)). Residues 506 to 508 (RGD) carry the Cell attachment site motif. 2 disulfides stabilise this stretch: cysteine 595–cysteine 624 and cysteine 612–cysteine 626. A GPS region spans residues 595–642 (CVSWNTDVEDGRWTPSGCEIVEASETHTVCSCNRMANLAIIMASGELT). A helical membrane pass occupies residues 645 to 672 (FSLYIISHVGTVISLVCLALAIATFLLC). Topologically, residues 673 to 679 (RAVQNHN) are cytoplasmic. A helical membrane pass occupies residues 680 to 701 (TYMHLHLCVCLFLAKILFLTGI). Residues 702-711 (DKTDNQTACA) lie on the Extracellular side of the membrane. Asparagine 706 is a glycosylation site (N-linked (GlcNAc...) asparagine). The helical transmembrane segment at 712 to 735 (IIAGFLHYLFLACFFWMLVEAVML) threads the bilayer. Residues 736–754 (FLMVRNLKVVNYFSSRNIK) lie on the Cytoplasmic side of the membrane. The chain crosses the membrane as a helical span at residues 755-776 (MLHLCAFGYGLPVLVVIISASV). Residues 777-792 (QPRGYGMHNRCWLNTE) lie on the Extracellular side of the membrane. Residues 793–821 (TGFIWSFLGPVCMIITINSVLLAWTLWVL) form a helical membrane-spanning segment. Residues 822-839 (RQKLCSVSSEVSKLKDTR) lie on the Cytoplasmic side of the membrane. A helical membrane pass occupies residues 840–859 (LLTFKAIAQIFILGCSWVLG). Residues 860–874 (IFQIGPLASIMAYLF) lie on the Extracellular side of the membrane. Residues 875 to 897 (TIINSLQGAFIFLIHCLLNRQVR) traverse the membrane as a helical segment. Residues 898-931 (DEYKKLLTRKTDLSSHSQTSGILLSSMPSTSKMG) are Cytoplasmic-facing.

This sequence belongs to the G-protein coupled receptor 2 family. Adhesion G-protein coupled receptor (ADGR) subfamily. In macrophages; but absent from those which are localized within T-cell areas of lymph nodes and spleen. Low level of expression on blood monocytes.

The protein localises to the cell membrane. Its function is as follows. Orphan receptor involved in cell adhesion and probably in cell-cell interactions specifically involving cells of the immune system. May play a role in regulatory T-cells (Treg) development. The polypeptide is Adhesion G protein-coupled receptor E1 (Adgre1) (Mus musculus (Mouse)).